We begin with the raw amino-acid sequence, 534 residues long: MAKELTFEQQARAKLLEGINKLAKAVKITAGPKGRNALIEKKYGAPLIVNDGVTIAREIELKDPVENMGAKLIAEAAISTNDIAGDGTTTATILTHEIVNKAIEAINNGTNPVNLRIGIENAAKLVSEYLTSVSKPIKSIDEITQVGAISSGSKFIGELIAKAMDIVGPSGVISIDDAKSFDTTLDTTDGLEFKGGYSSPYMVTDSEKMLSELANPKILVSLNKINTVKEILPLLEASVESSAPLLIVASDIAEDVVTALAINKLRGTLNVVSVKCAEFGEAQKNTLEDLAISVNTILVDSAAGIEFKDLELNKLGSAEKVIISKDKTTVINGACHKDVLAKYLNNLKAKSANLTSKYDKERITKRIANLSNGVAVIHVGGATEVAQKELKLRIEDALNSTKAAVEEGIVAGGGIALMNAIEVLKQVKESNPEIALGYEIVRSSLTAPARQIIENAGQNSSKIINNIINSKQLGYGYNAETNEFVNMINNGIIDPTKVTKTALEKACSVAALLITTEVAINDELKEEKPSLNHL.

Residues 29–32 (TAGP), 86–90 (DGTTT), Gly413, and Asp494 contribute to the ATP site.

This sequence belongs to the chaperonin (HSP60) family. Forms a cylinder of 14 subunits composed of two heptameric rings stacked back-to-back. Interacts with the co-chaperonin GroES.

The protein resides in the cytoplasm. The catalysed reaction is ATP + H2O + a folded polypeptide = ADP + phosphate + an unfolded polypeptide.. Together with its co-chaperonin GroES, plays an essential role in assisting protein folding. The GroEL-GroES system forms a nano-cage that allows encapsulation of the non-native substrate proteins and provides a physical environment optimized to promote and accelerate protein folding. This chain is Chaperonin GroEL, found in Mycoplasmoides gallisepticum (strain R(low / passage 15 / clone 2)) (Mycoplasma gallisepticum).